Here is a 141-residue protein sequence, read N- to C-terminus: Nucleoside diphosphate kinase (141 aa).

Positions 11, 59, 87, 93, 104, and 114 each coordinate ATP. The Pros-phosphohistidine intermediate role is filled by H117.

It belongs to the NDK family. As to quaternary structure, homotetramer. Mg(2+) is required as a cofactor.

It localises to the cytoplasm. The enzyme catalyses a 2'-deoxyribonucleoside 5'-diphosphate + ATP = a 2'-deoxyribonucleoside 5'-triphosphate + ADP. The catalysed reaction is a ribonucleoside 5'-diphosphate + ATP = a ribonucleoside 5'-triphosphate + ADP. In terms of biological role, major role in the synthesis of nucleoside triphosphates other than ATP. The ATP gamma phosphate is transferred to the NDP beta phosphate via a ping-pong mechanism, using a phosphorylated active-site intermediate. The polypeptide is Nucleoside diphosphate kinase (Burkholderia ambifaria (strain MC40-6)).